The primary structure comprises 270 residues: Phosphatidylglycerol--prolipoprotein diacylglyceryl transferase (270 aa).

4 consecutive transmembrane segments (helical) span residues 19–39 (FPVY…LWLA), 56–76 (LVLI…VIFE), 92–112 (QGGL…ILFA), and 116–136 (GVSF…GQAI). Arg138 is a binding site for a 1,2-diacyl-sn-glycero-3-phospho-(1'-sn-glycerol). Transmembrane regions (helical) follow at residues 178 to 198 (HPTF…LLAL), 206 to 226 (GELF…VEGL), and 236 to 256 (LRIA…FIIV).

The protein belongs to the Lgt family.

Its subcellular location is the cell membrane. It catalyses the reaction L-cysteinyl-[prolipoprotein] + a 1,2-diacyl-sn-glycero-3-phospho-(1'-sn-glycerol) = an S-1,2-diacyl-sn-glyceryl-L-cysteinyl-[prolipoprotein] + sn-glycerol 1-phosphate + H(+). The protein operates within protein modification; lipoprotein biosynthesis (diacylglyceryl transfer). Catalyzes the transfer of the diacylglyceryl group from phosphatidylglycerol to the sulfhydryl group of the N-terminal cysteine of a prolipoprotein, the first step in the formation of mature lipoproteins. The sequence is that of Phosphatidylglycerol--prolipoprotein diacylglyceryl transferase from Bacillus cereus (strain Q1).